The sequence spans 197 residues: Probable proteasome subunit beta type-4 (197 aa).

Belongs to the peptidase T1B family. As to quaternary structure, the 26S proteasome consists of a 20S proteasome core and two 19S regulatory subunits. The 20S proteasome core is composed of 28 subunits that are arranged in four stacked rings, resulting in a barrel-shaped structure. The two end rings are each formed by seven alpha subunits, and the two central rings are each formed by seven beta subunits. The catalytic chamber with the active sites is on the inside of the barrel.

The protein localises to the cytoplasm. Its subcellular location is the nucleus. Functionally, non-catalytic component of the proteasome which degrades poly-ubiquitinated proteins in the cytoplasm and in the nucleus. It is essential for the regulated turnover of proteins and for the removal of misfolded proteins. The proteasome is a multicatalytic proteinase complex that is characterized by its ability to cleave peptides with Arg, Phe, Tyr, Leu, and Glu adjacent to the leaving group at neutral or slightly basic pH. It has an ATP-dependent proteolytic activity. This is Probable proteasome subunit beta type-4 (PRE1) from Encephalitozoon cuniculi (strain GB-M1) (Microsporidian parasite).